We begin with the raw amino-acid sequence, 405 residues long: Tyrosine--tRNA ligase (405 aa).

Positions 48–57 (PTAPDLHLGH) match the 'HIGH' region motif. A 'KMSKS' region motif is present at residues 232–236 (KMSKS). Lys-235 is a binding site for ATP. The 62-residue stretch at 343 to 404 (IWLPKLLADA…GKRRFVKVIF (62 aa)) folds into the S4 RNA-binding domain.

It belongs to the class-I aminoacyl-tRNA synthetase family. TyrS type 2 subfamily. Homodimer.

It is found in the cytoplasm. The catalysed reaction is tRNA(Tyr) + L-tyrosine + ATP = L-tyrosyl-tRNA(Tyr) + AMP + diphosphate + H(+). Catalyzes the attachment of tyrosine to tRNA(Tyr) in a two-step reaction: tyrosine is first activated by ATP to form Tyr-AMP and then transferred to the acceptor end of tRNA(Tyr). The chain is Tyrosine--tRNA ligase from Desulfotalea psychrophila (strain LSv54 / DSM 12343).